The following is a 199-amino-acid chain: Gamma-glutamylcyclotransferase 2-3 (199 aa).

Residue 5–10 coordinates substrate; it reads VFGYGS. The active-site Proton acceptor is Glu-86.

It belongs to the gamma-glutamylcyclotransferase family. Mn(2+) serves as cofactor.

Its subcellular location is the cytoplasm. It carries out the reaction glutathione = L-cysteinylglycine + 5-oxo-L-proline. Converts GSH to 5-oxoproline and cysteine-glycine (Cys-Gly) dipeptide in vitro and plays a significant role in glutathione (GSH) homeostasis. Has no activity towards gamma-glutamyl-L-cysteine but possesses very low activity towards gamma-glutamyl-L-alanine. This Arabidopsis thaliana (Mouse-ear cress) protein is Gamma-glutamylcyclotransferase 2-3.